The following is a 347-amino-acid chain: DNA-directed RNA polymerase subunit alpha (347 aa).

Residues 1–230 (MFKGFQKPKR…DHMTIFINFE (230 aa)) are alpha N-terminal domain (alpha-NTD). The tract at residues 247–347 (MNEVLNRSVE…EDDGQDQIGE (101 aa)) is alpha C-terminal domain (alpha-CTD). Residues 320 to 347 (GRLVAPPPSAGGGPDFGPEDDGQDQIGE) are disordered. Positions 336–347 (GPEDDGQDQIGE) are enriched in acidic residues.

This sequence belongs to the RNA polymerase alpha chain family. Homodimer. The RNAP catalytic core consists of 2 alpha, 1 beta, 1 beta' and 1 omega subunit. When a sigma factor is associated with the core the holoenzyme is formed, which can initiate transcription.

It carries out the reaction RNA(n) + a ribonucleoside 5'-triphosphate = RNA(n+1) + diphosphate. Its function is as follows. DNA-dependent RNA polymerase catalyzes the transcription of DNA into RNA using the four ribonucleoside triphosphates as substrates. The chain is DNA-directed RNA polymerase subunit alpha from Solibacter usitatus (strain Ellin6076).